The following is a 28-amino-acid chain: Mu-theraphotoxin-Hsp1a (28 aa).

Disulfide bonds link C2–C16, C9–C21, and C15–C25. N28 carries the post-translational modification Asparagine amide.

This sequence belongs to the neurotoxin 30 (phrixotoxin) family. As to expression, expressed by the venom gland.

It localises to the secreted. Potent and selective inhibitor of Nav1.7/SCN9A sodium channels. Inhibits Nav1.7/SCN9A peak current (IC(50)=13 nM). In vivo, does not induce visible signs of toxicity when intravenously injected into mice. This Homoeomma sp. (Peruvian tarantula) protein is Mu-theraphotoxin-Hsp1a.